Reading from the N-terminus, the 208-residue chain is Holliday junction branch migration complex subunit RuvA (208 aa).

The interval 1-63 (MIGMLTGRVE…QDSVTLYGFL (63 aa)) is domain I. The domain II stretch occupies residues 64–142 (DRDSKRVFLQ…LNQSDDASAG (79 aa)). Positions 143-151 (NAPYQPTVD) are flexible linker. Positions 151 to 208 (DAGVEQVVEGLVSLGWRQQDAQRAVNEACAENDVPMPLASDDAPRVLRLALARMDRGR) are domain III.

This sequence belongs to the RuvA family. Homotetramer. Forms an RuvA(8)-RuvB(12)-Holliday junction (HJ) complex. HJ DNA is sandwiched between 2 RuvA tetramers; dsDNA enters through RuvA and exits via RuvB. An RuvB hexamer assembles on each DNA strand where it exits the tetramer. Each RuvB hexamer is contacted by two RuvA subunits (via domain III) on 2 adjacent RuvB subunits; this complex drives branch migration. In the full resolvosome a probable DNA-RuvA(4)-RuvB(12)-RuvC(2) complex forms which resolves the HJ.

The protein resides in the cytoplasm. Its function is as follows. The RuvA-RuvB-RuvC complex processes Holliday junction (HJ) DNA during genetic recombination and DNA repair, while the RuvA-RuvB complex plays an important role in the rescue of blocked DNA replication forks via replication fork reversal (RFR). RuvA specifically binds to HJ cruciform DNA, conferring on it an open structure. The RuvB hexamer acts as an ATP-dependent pump, pulling dsDNA into and through the RuvAB complex. HJ branch migration allows RuvC to scan DNA until it finds its consensus sequence, where it cleaves and resolves the cruciform DNA. The sequence is that of Holliday junction branch migration complex subunit RuvA from Bifidobacterium longum subsp. infantis (strain ATCC 15697 / DSM 20088 / JCM 1222 / NCTC 11817 / S12).